The primary structure comprises 77 residues: MTRLTVVFLAILVLLPLATSNSGADEAPASLSDLLHRTKRCAGGNQCTTDAECCGNYQCRCSLASNCSGSNPKKRCT.

Positions 1–21 (MTRLTVVFLAILVLLPLATSN) are cleaved as a signal peptide. A propeptide spanning residues 22–40 (SGADEAPASLSDLLHRTKR) is cleaved from the precursor.

Contains 4 disulfide bonds. Expressed by the venom duct.

It localises to the secreted. This is Teretoxin Tan15.2 from Terebra anilis (Auger snail).